A 422-amino-acid polypeptide reads, in one-letter code: MSLASSLVVSSNVELSPSSFGFLDSVRDGPQIPDSFRFSSRNRVPNLINKKQKWGNHSHSTELKYPILHESGYGSVIVASMVANPAGEIAVSAEQKVYNVVMKQAALVKRQLRTAGELDVKPDIVLPGTLSLLNEAYDRCGEVCAEYAKTFYLGTMLMTPERQKAIWAIYVWCRRTDELVDGPNASHITPTALDRWEARLEELFQGRPFDMLDAALADTVTKFPVDIQPFKDMIEGMRMDLRKSRYKNFDELYLYCYYVAGTVGLMSVPVMGIAPESQASTESVYNAALALGIANQAPPNILRDVGEDARRGRIYLPQDELAQAGLSDEDIFAGRVTDKWRNFMKNQIKRARMFFDEAEKGVLELNKASRWPVWASLLLYRQILDEIEANDYDNFTKRAYVSKAKKILALPMAYGRALLGPS.

A chloroplast-targeting transit peptide spans 1–83; sequence MSLASSLVVS…GSVIVASMVA (83 aa).

Belongs to the phytoene/squalene synthase family. Monomer.

It is found in the plastid. Its subcellular location is the chloroplast. The enzyme catalyses 2 (2E,6E,10E)-geranylgeranyl diphosphate = 15-cis-phytoene + 2 diphosphate. The protein operates within carotenoid biosynthesis; phytoene biosynthesis; all-trans-phytoene from geranylgeranyl diphosphate: step 1/1. Functionally, catalyzes the reaction from prephytoene diphosphate to phytoene. This is Phytoene synthase, chloroplastic (PSY) from Cucumis melo (Muskmelon).